A 151-amino-acid polypeptide reads, in one-letter code: Sperm surface protein Sp17 (151 aa).

Disordered stretches follow at residues 56-115 (DPAE…EKEE) and 127-151 (GHIAREEAKKMKTNSLQNEEKEENK). Residues 62–98 (SKVEDRFYNNHAFEEQEPPEKSDPKQEESQISGKEEE) show a composition bias toward basic and acidic residues. One can recognise an IQ domain in the interval 114–143 (EEVAAVKIQAAFRGHIAREEAKKMKTNSLQ).

Homodimer. May interact with ROPN1. In terms of tissue distribution, testis and sperm specific.

It is found in the membrane. In terms of biological role, sperm surface zona pellucida binding protein. Helps to bind spermatozoa to the zona pellucida with high affinity. Might function in binding zona pellucida and carbohydrates. The polypeptide is Sperm surface protein Sp17 (SPA17) (Homo sapiens (Human)).